Consider the following 501-residue polypeptide: uncharacterized protein (501 aa).

The active-site Proton donor is glutamate 236. The active-site Nucleophile is the glutamate 333.

This sequence belongs to the glycosyl hydrolase 5 (cellulase A) family.

The protein localises to the mitochondrion intermembrane space. This is an uncharacterized protein from Saccharomyces cerevisiae (strain ATCC 204508 / S288c) (Baker's yeast).